Consider the following 336-residue polypeptide: Ferredoxin--NADP reductase 1 (336 aa).

7 residues coordinate FAD: E37, K45, F50, V90, L125, D287, and T328.

It belongs to the ferredoxin--NADP reductase type 2 family. In terms of assembly, homodimer. Requires FAD as cofactor.

It catalyses the reaction 2 reduced [2Fe-2S]-[ferredoxin] + NADP(+) + H(+) = 2 oxidized [2Fe-2S]-[ferredoxin] + NADPH. This is Ferredoxin--NADP reductase 1 from Bacillus velezensis (strain DSM 23117 / BGSC 10A6 / LMG 26770 / FZB42) (Bacillus amyloliquefaciens subsp. plantarum).